Consider the following 278-residue polypeptide: Digeranylgeranylglyceryl phosphate synthase (278 aa).

A run of 8 helical transmembrane segments spans residues 17–37, 40–60, 91–111, 129–149, 153–173, 204–224, 226–246, and 257–277; these read MASFGAFIGGLIASYFNLEMV, LIFASIVVFLVCGFGNALNDI, LLVFTGLCISLFNITCFLMAV, IIGNLIVAYLTGSVFIFGGIA, IDVTIMLFLCALFAMWSREII, LLLVFAVLLSSLPYLFGFFGI, YLISVVFCDLLFLIGIFPLLI, and SRNIKIVTNLVLVAFVIGSFF.

Belongs to the UbiA prenyltransferase family. DGGGP synthase subfamily. Mg(2+) serves as cofactor.

It is found in the cell membrane. The enzyme catalyses sn-3-O-(geranylgeranyl)glycerol 1-phosphate + (2E,6E,10E)-geranylgeranyl diphosphate = 2,3-bis-O-(geranylgeranyl)-sn-glycerol 1-phosphate + diphosphate. It functions in the pathway membrane lipid metabolism; glycerophospholipid metabolism. Prenyltransferase that catalyzes the transfer of the geranylgeranyl moiety of geranylgeranyl diphosphate (GGPP) to the C2 hydroxyl of (S)-3-O-geranylgeranylglyceryl phosphate (GGGP). This reaction is the second ether-bond-formation step in the biosynthesis of archaeal membrane lipids. The sequence is that of Digeranylgeranylglyceryl phosphate synthase from Methanococcus maripaludis (strain C5 / ATCC BAA-1333).